The following is a 323-amino-acid chain: Beta-ketoacyl-[acyl-carrier-protein] synthase III (323 aa).

Active-site residues include cysteine 113 and histidine 250. Residues 251–255 are ACP-binding; it reads QANRR. Residue asparagine 280 is part of the active site.

This sequence belongs to the thiolase-like superfamily. FabH family. As to quaternary structure, homodimer.

The protein resides in the cytoplasm. The enzyme catalyses malonyl-[ACP] + acetyl-CoA + H(+) = 3-oxobutanoyl-[ACP] + CO2 + CoA. It functions in the pathway lipid metabolism; fatty acid biosynthesis. Functionally, catalyzes the condensation reaction of fatty acid synthesis by the addition to an acyl acceptor of two carbons from malonyl-ACP. Catalyzes the first condensation reaction which initiates fatty acid synthesis and may therefore play a role in governing the total rate of fatty acid production. Possesses both acetoacetyl-ACP synthase and acetyl transacylase activities. Its substrate specificity determines the biosynthesis of branched-chain and/or straight-chain of fatty acids. This Rhizobium johnstonii (strain DSM 114642 / LMG 32736 / 3841) (Rhizobium leguminosarum bv. viciae) protein is Beta-ketoacyl-[acyl-carrier-protein] synthase III.